We begin with the raw amino-acid sequence, 601 residues long: MGAAGDLPYSVLADFYERIESTSSRLAMTDYLVALFKKTPPEVIDKVVYLTQGQLRPDYEGVELGVAEKLALRALAKASGRHLKDVEDLYKKTGDIGAVAEKLLTAPGGGLLEFFGTPVQKKELTVSQVYSALMKIAQASGEGAQETKVNTLVALLQDAKPKEARYILRTVLGRLRLGIADMTILDALAAAFAGSKAARDVIERAYTKHPDLGYIAKLLATKGLDAVASLKIEVGIPVLPMLAERLSDPAEILEKLGGKCLAEYKYDGERVQAHKSGDKVLLFSRRLENITHHYPDVVEYVKRLKVREAIVEGEIVAYNPDTGEMLPFQELMHRRRKYDVEKAMKEYPVRVYLFDVIYMDGEELIEKPLDQRRLILEKIVPEGDEDILLSTAKVVGDAKDLLHFFEQAISEGCEGVMCKSIGPGSIYQMGARGWLWIKFKRDYRMEMTDTVDLVVVGGFHGRGKRAGTYGALLMAAYDPETDTFKTVCKVGTGFTDEDLAKLPELLDPYKIPHRHPRVFSKIEADVWFVPAVVLEIIGAEITLSPLHTCALNKLEEGAGLAIRFPRFTGRYRFDKKPEQATTESELIEMYKSQKKTALQQS.

Position 263 (Glu-263) interacts with ATP. Lys-265 (N6-AMP-lysine intermediate) is an active-site residue. Residues Arg-270, Arg-285, Glu-314, Phe-354, Arg-432, and Lys-438 each coordinate ATP.

The protein belongs to the ATP-dependent DNA ligase family. Mg(2+) is required as a cofactor.

The catalysed reaction is ATP + (deoxyribonucleotide)n-3'-hydroxyl + 5'-phospho-(deoxyribonucleotide)m = (deoxyribonucleotide)n+m + AMP + diphosphate.. In terms of biological role, DNA ligase that seals nicks in double-stranded DNA during DNA replication, DNA recombination and DNA repair. The protein is DNA ligase 2 of Thermofilum pendens (strain DSM 2475 / Hrk 5).